A 1048-amino-acid chain; its full sequence is Calcium-transporting ATPase, endoplasmic reticulum-type (1048 aa).

Residues 1 to 63 lie on the Cytoplasmic side of the membrane; the sequence is MEEKPFPAWS…WRLVLEQFDD (63 aa). A helical transmembrane segment spans residues 64–84; that stretch reads TLVKILLGAAFISFVLAYVNQ. At 85 to 93 the chain is on the lumenal side; sequence DETGESGFE. A helical transmembrane segment spans residues 94–114; the sequence is AYVEPLVILWILVLNAIVGVW. The Cytoplasmic segment spans residues 115–213; the sequence is QESNAEKALE…DCELQAKENM (99 aa). Residues 214–234 form a helical membrane-spanning segment; it reads VFAGTTVVNGSCICIVVNTGM. At 235–267 the chain is on the lumenal side; that stretch reads CTEIGKIQRQIHDASMEESDTPLKKKLDEFGNR. Residues 268 to 288 traverse the membrane as a helical segment; the sequence is LTFAIGVVCLVVWAINYKYFL. The Cytoplasmic segment spans residues 289–312; the sequence is SWEVVDDWPSDFRFSFEKCAYYFK. The chain crosses the membrane as a helical span at residues 313–333; sequence IAVALAVAAIPEGLPSVITTC. Positions 319, 320, 322, and 324 each coordinate Ca(2+). Topologically, residues 334 to 800 are lumenal; that stretch reads LALGTRKMAQ…ISSNVGEVIS (467 aa). Asp-366 acts as the 4-aspartylphosphate intermediate in catalysis. Mg(2+) contacts are provided by Asp-728 and Asp-732. Asn-794 and Glu-797 together coordinate Ca(2+). Residues 801–821 form a helical membrane-spanning segment; it reads IFLTAVLGIPECLIPVQLLWV. 3 residues coordinate Ca(2+): Asn-822, Thr-825, and Asp-826. Topologically, residues 822 to 862 are cytoplasmic; sequence NLVTDGPPATALGFNPADVDIMQKPPRKNTDALINSWVFFR. The helical transmembrane segment at 863–883 threads the bilayer; that stretch reads YMVIGSYVGIATVGIFIVWYT. Residues 884–944 lie on the Lumenal side of the membrane; sequence QASFLGINIV…CEYFTVGKVK (61 aa). The chain crosses the membrane as a helical span at residues 945–965; it reads AMTLSLSVLVAIEMFNSLNAL. Residue Glu-957 participates in Ca(2+) binding. The Cytoplasmic segment spans residues 966-981; the sequence is SEDNSLIKMPPWRNPW. Residues 982-1002 traverse the membrane as a helical segment; that stretch reads LLVAMSLSFALHSVILYVPFL. Residues 1003 to 1007 are Lumenal-facing; that stretch reads ADIFG. A helical transmembrane segment spans residues 1008-1028; sequence IVPLSLYEWLLVILLSAPVIL. Over 1029–1048 the chain is Cytoplasmic; sequence IDEVLKFVGRRRRRTKLKAA.

It belongs to the cation transport ATPase (P-type) (TC 3.A.3) family. Type IIA subfamily. 9-fold higher level in roots compared with leaves.

The protein localises to the endoplasmic reticulum membrane. The catalysed reaction is Ca(2+)(in) + ATP + H2O = Ca(2+)(out) + ADP + phosphate + H(+). In terms of biological role, this magnesium-dependent enzyme catalyzes the hydrolysis of ATP coupled with the translocation of calcium from the cytosol to an endomembrane compartment. This Solanum lycopersicum (Tomato) protein is Calcium-transporting ATPase, endoplasmic reticulum-type.